The following is a 215-amino-acid chain: Urease accessory protein UreG (215 aa).

GTP is bound at residue 24-31; sequence GPVGSGKT.

Belongs to the SIMIBI class G3E GTPase family. UreG subfamily. In terms of assembly, homodimer. UreD, UreF and UreG form a complex that acts as a GTP-hydrolysis-dependent molecular chaperone, activating the urease apoprotein by helping to assemble the nickel containing metallocenter of UreC. The UreE protein probably delivers the nickel.

The protein localises to the cytoplasm. Its function is as follows. Facilitates the functional incorporation of the urease nickel metallocenter. This process requires GTP hydrolysis, probably effectuated by UreG. This is Urease accessory protein UreG from Burkholderia orbicola (strain MC0-3).